Here is a 308-residue protein sequence, read N- to C-terminus: uncharacterized protein (308 aa).

The ABC transporter domain occupies 6–234; sequence LHIEGLDKKI…TEKAIIEVQP (229 aa). Residue 38–45 participates in ATP binding; it reads GPNGSGKT.

Belongs to the ABC transporter superfamily.

This is an uncharacterized protein from Bacillus subtilis (strain 168).